Reading from the N-terminus, the 113-residue chain is MHEMSLAMAAIDLAAEQATQRGFTKVTALWLEVGSFSCVDPDTIAFCFEAAAKGTAVEGAQLHFQHQAAEAWCYDCNKTVTLTERGQACPECGGYKLRVAQGDSLRITDIEVS.

H2 is a binding site for Ni(2+). 4 residues coordinate Zn(2+): C73, C76, C89, and C92.

Belongs to the HypA/HybF family.

Its function is as follows. Involved in the maturation of [NiFe] hydrogenases. Required for nickel insertion into the metal center of the hydrogenase. This Aeromonas hydrophila subsp. hydrophila (strain ATCC 7966 / DSM 30187 / BCRC 13018 / CCUG 14551 / JCM 1027 / KCTC 2358 / NCIMB 9240 / NCTC 8049) protein is Hydrogenase maturation factor HypA.